The chain runs to 205 residues: Guanylate kinase (205 aa).

Residues 5-184 (GLLIVLSGPS…AVQKIKGIVE (180 aa)) enclose the Guanylate kinase-like domain. Position 12-19 (12-19 (GPSGVGKG)) interacts with ATP.

Belongs to the guanylate kinase family.

The protein resides in the cytoplasm. It carries out the reaction GMP + ATP = GDP + ADP. Essential for recycling GMP and indirectly, cGMP. In Listeria innocua serovar 6a (strain ATCC BAA-680 / CLIP 11262), this protein is Guanylate kinase.